A 493-amino-acid polypeptide reads, in one-letter code: Cytochrome P450 monooxygenase mfmF (493 aa).

Helical transmembrane passes span 3–23 and 301–321; these read SLIP…RLFF and VLFA…FHLV. C440 contributes to the heme binding site.

The protein belongs to the cytochrome P450 family. Requires heme as cofactor.

It is found in the membrane. It functions in the pathway secondary metabolite biosynthesis; terpenoid biosynthesis. Cytochrome P450 monooxygenase; part of the gene cluster that mediates the biosynthesis of the phthalide-terpenoid hybrid 11'-O-desmethylfendlerol. Within the pathway, mfmF catalyzes C-3 hydroxylation of 5-hydroxy-4-(hydroxymethyl)-7-methoxy-6-methylphthalide to yield cyclopolic acid. The biosynthesis of 11'-O-desmethylfendlerol begins with the NR-PKS mfmB that forms 3,5-dimethylorsellinic acid (DMOA), which is then transformed into the phthalide 5,7-dihydroxy-4-(hydroxymethyl)-6-methylphthalide by the cytochrome P450 monooxygenase mfmA and the hydrolase mfmC. Subsequently, the methyltransferase mfmE catalyzes 7-O-methylation to yield 5-hydroxy-4-(hydroxymethyl)-7-methoxy-6-methylphthalide, which undergoes C-3 hydroxylation by the cytochrome P450 monooxygenase mfmF. The resultant cyclopolic acid (2,5-dihydroxy-4-(hydroxymethyl)-7-methoxy-6-methylphthalide) is then farnesylated by the DMATS-type prenyltransferase mfmD to afford 5-O-farnesylcyclopolic acid. Finally, the Pyr4-family terpene cyclase mfmH cyclizes the farnesyl moiety of 5-O-farnesylcyclopolic acid into a drimane-like structure, thus completing the biosynthesis of 11'-O-desmethylfendlerol. The polypeptide is Cytochrome P450 monooxygenase mfmF (Annulohypoxylon moriforme (Filamentous fungus)).